Reading from the N-terminus, the 179-residue chain is Probable galaptin lec-7 (179 aa).

The Galectin domain maps to 11–138 (SVYQIEENLK…SVDIESIVFK (128 aa)).

The polypeptide is Probable galaptin lec-7 (lec-7) (Caenorhabditis elegans).